The following is an 842-amino-acid chain: Glucans biosynthesis glucosyltransferase H (842 aa).

A run of 6 helical transmembrane segments spans residues 141–161 (LLLL…TILP), 194–214 (ILLL…TALM), 513–533 (VFLT…FLAL), 570–590 (LFAS…ILIW), 615–635 (VLLA…AFLG), and 680–700 (FLFW…VSVI).

Belongs to the glycosyltransferase 2 family. OpgH subfamily.

It localises to the cell inner membrane. Its pathway is glycan metabolism; osmoregulated periplasmic glucan (OPG) biosynthesis. Its function is as follows. Involved in the biosynthesis of osmoregulated periplasmic glucans (OPGs). The sequence is that of Glucans biosynthesis glucosyltransferase H from Enterobacter sp. (strain 638).